The following is a 127-amino-acid chain: MARVTAEDCNKIIPDRFRLVVLATRYAKLLNYKVETSYSKKEKRDKPPVIALRRIAAGKVSVAQLEQDLINSLCTRNIIEPLANQDDLEDVEEKFDYLPEVYVGEDYSDLDDQIFIDENGEYDERDK.

It belongs to the RNA polymerase subunit omega family. The RNAP catalytic core consists of 2 alpha, 1 beta, 1 beta' and 1 omega subunit. When a sigma factor is associated with the core the holoenzyme is formed, which can initiate transcription.

It carries out the reaction RNA(n) + a ribonucleoside 5'-triphosphate = RNA(n+1) + diphosphate. Promotes RNA polymerase assembly. Latches the N- and C-terminal regions of the beta' subunit thereby facilitating its interaction with the beta and alpha subunits. The sequence is that of DNA-directed RNA polymerase subunit omega from Rickettsia canadensis (strain McKiel).